A 412-amino-acid chain; its full sequence is L-cysteine:1D-myo-inositol 2-amino-2-deoxy-alpha-D-glucopyranoside ligase (412 aa).

Residues 1–30 (MQTWSSPSVPKLRGAPRPLRLHDTATGEVR) are disordered. Residue cysteine 43 coordinates Zn(2+). Residues 43 to 46 (CGIT), threonine 58, and 81 to 83 (NVT) contribute to the L-cysteinyl-5'-AMP site. Positions 45–55 (ITPYDATHLGH) match the 'HIGH' region motif. Positions 187–192 (ERGGDP) match the 'ERGGDP' region motif. Position 227 (tryptophan 227) interacts with L-cysteinyl-5'-AMP. A Zn(2+)-binding site is contributed by cysteine 231. Residue 249–251 (GSD) participates in L-cysteinyl-5'-AMP binding. Position 256 (histidine 256) interacts with Zn(2+). Isoleucine 283 is an L-cysteinyl-5'-AMP binding site. The 'KMSKS' region signature appears at 289 to 293 (KMSKS).

It belongs to the class-I aminoacyl-tRNA synthetase family. MshC subfamily. In terms of assembly, monomer. Zn(2+) is required as a cofactor.

The catalysed reaction is 1D-myo-inositol 2-amino-2-deoxy-alpha-D-glucopyranoside + L-cysteine + ATP = 1D-myo-inositol 2-(L-cysteinylamino)-2-deoxy-alpha-D-glucopyranoside + AMP + diphosphate + H(+). Catalyzes the ATP-dependent condensation of GlcN-Ins and L-cysteine to form L-Cys-GlcN-Ins. In Actinosynnema mirum (strain ATCC 29888 / DSM 43827 / JCM 3225 / NBRC 14064 / NCIMB 13271 / NRRL B-12336 / IMRU 3971 / 101), this protein is L-cysteine:1D-myo-inositol 2-amino-2-deoxy-alpha-D-glucopyranoside ligase.